The primary structure comprises 235 residues: Glucosamine-6-phosphate deaminase (235 aa).

Asp62 serves as the catalytic Proton acceptor; for enolization step. The For ring-opening step role is filled by Asn128. The active-site Proton acceptor; for ring-opening step is the His130. The active-site For ring-opening step is Glu135.

Belongs to the glucosamine/galactosamine-6-phosphate isomerase family. NagB subfamily.

It catalyses the reaction alpha-D-glucosamine 6-phosphate + H2O = beta-D-fructose 6-phosphate + NH4(+). It functions in the pathway amino-sugar metabolism; N-acetylneuraminate degradation; D-fructose 6-phosphate from N-acetylneuraminate: step 5/5. Functionally, catalyzes the reversible isomerization-deamination of glucosamine 6-phosphate (GlcN6P) to form fructose 6-phosphate (Fru6P) and ammonium ion. In Streptococcus pneumoniae serotype 2 (strain D39 / NCTC 7466), this protein is Glucosamine-6-phosphate deaminase.